A 204-amino-acid chain; its full sequence is Large ribosomal subunit protein eL15y (204 aa).

Belongs to the eukaryotic ribosomal protein eL15 family.

The chain is Large ribosomal subunit protein eL15y (SB62) from Picea mariana (Black spruce).